The following is a 145-amino-acid chain: Immunoglobulin iota chain (145 aa).

The first 19 residues, 1–19, serve as a signal peptide directing secretion; it reads MSWAPVLLMLFVYCTGCGP. The framework-1 stretch occupies residues 20 to 41; it reads QPVLHQPPAMSSALGTTIRLTC. An Ig-like V-type domain is found at 20–132; sequence QPVLHQPPAM…EKEEREREWE (113 aa). Residues cysteine 41 and cysteine 115 are joined by a disulfide bond. Residues 42 to 56 form a complementarity-determining-1 region; the sequence is TLRNDHDIGVYSVYW. The segment at 57 to 70 is framework-2; sequence YQQRPGHPPRFLLR. Positions 71 to 81 are complementarity-determining-2; the sequence is YFSQSDKSQGP. The tract at residues 82–115 is framework-3; sequence QVPPRFSGSKDVARNRGYLSISELQPEDEAMYYC. A compositionally biased stretch (basic and acidic residues) spans 121 to 130; it reads SSEKEERERE. The disordered stretch occupies residues 121-145; it reads SSEKEEREREWEEEMEPTAARTRVP.

It belongs to the immunoglobulin superfamily. In terms of assembly, interacts with IGLL1. Interacts with SYNV1/HRD1 (via N-terminus); this interaction leads to increased VPREB1 ubiquitination and degradation in pre-B cells, possibly through a lysosomal, not proteasomal, pathway. In terms of tissue distribution, only expressed by pre-B-cells.

It localises to the endoplasmic reticulum. Its function is as follows. Associates with the Ig-mu chain to form a molecular complex that is expressed on the surface of pre-B-cells. This complex presumably regulates Ig gene rearrangements in the early steps of B-cell differentiation. In Homo sapiens (Human), this protein is Immunoglobulin iota chain (VPREB1).